Consider the following 364-residue polypeptide: UDP-N-acetylglucosamine--N-acetylmuramyl-(pentapeptide) pyrophosphoryl-undecaprenol N-acetylglucosamine transferase (364 aa).

UDP-N-acetyl-alpha-D-glucosamine contacts are provided by residues 10-12 (TGG), asparagine 128, arginine 170, serine 199, isoleucine 250, and glutamine 295.

The protein belongs to the glycosyltransferase 28 family. MurG subfamily.

It is found in the cell inner membrane. The enzyme catalyses di-trans,octa-cis-undecaprenyl diphospho-N-acetyl-alpha-D-muramoyl-L-alanyl-D-glutamyl-meso-2,6-diaminopimeloyl-D-alanyl-D-alanine + UDP-N-acetyl-alpha-D-glucosamine = di-trans,octa-cis-undecaprenyl diphospho-[N-acetyl-alpha-D-glucosaminyl-(1-&gt;4)]-N-acetyl-alpha-D-muramoyl-L-alanyl-D-glutamyl-meso-2,6-diaminopimeloyl-D-alanyl-D-alanine + UDP + H(+). The protein operates within cell wall biogenesis; peptidoglycan biosynthesis. Its function is as follows. Cell wall formation. Catalyzes the transfer of a GlcNAc subunit on undecaprenyl-pyrophosphoryl-MurNAc-pentapeptide (lipid intermediate I) to form undecaprenyl-pyrophosphoryl-MurNAc-(pentapeptide)GlcNAc (lipid intermediate II). This Chlorobaculum tepidum (strain ATCC 49652 / DSM 12025 / NBRC 103806 / TLS) (Chlorobium tepidum) protein is UDP-N-acetylglucosamine--N-acetylmuramyl-(pentapeptide) pyrophosphoryl-undecaprenol N-acetylglucosamine transferase.